The primary structure comprises 436 residues: Nucleolar protein 4-like (436 aa).

Residues 1–184 (MSDSTWMSAD…KMNDSEGMDP (184 aa)) are disordered. Residues 41–61 (SESGSGNGSSTLNPSTSSSTQ) are compositionally biased toward low complexity. S130 is subject to Phosphoserine. A compositionally biased stretch (acidic residues) spans 160 to 169 (ADDDDDDHDD). Residues 170 to 184 (HEDNDKMNDSEGMDP) show a composition bias toward basic and acidic residues. At S295 the chain carries Phosphoserine. The segment covering 351–366 (QPPASLQTGNHSNGPT) has biased composition (polar residues). The interval 351–400 (QPPASLQTGNHSNGPTDLSMKGGASTTSTTPTPTPSSTSTSRPVPTAQLS) is disordered. A compositionally biased stretch (low complexity) spans 375–396 (STTSTTPTPTPSSTSTSRPVPT).

This Pongo abelii (Sumatran orangutan) protein is Nucleolar protein 4-like (NOL4L).